Consider the following 426-residue polypeptide: Pyruvate, phosphate dikinase regulatory protein, chloroplastic (426 aa).

The transit peptide at 1–41 (MIGCAKPLAAPLQAWARPPSPAGRRLPPSFCAPDTSPALTR) directs the protein to the chloroplast. Disordered stretches follow at residues 1-76 (MIGC…HLDR) and 94-124 (AALSSASVSAPPVIKSPRPEDAAVAAEDGED). A compositionally biased stretch (low complexity) spans 94–119 (AALSSASVSAPPVIKSPRPEDAAVAA). 153–160 (HSVNAALG) is an ADP binding site.

The protein belongs to the pyruvate, phosphate/water dikinase regulatory protein family. PDRP subfamily. Homodimer at pH 7.5 and homotetramer at pH 8.3. It depends on Mg(2+) as a cofactor. As to expression, leaf mesophyll-cells.

Its subcellular location is the plastid. It localises to the chloroplast stroma. It carries out the reaction N(tele)-phospho-L-histidyl/L-threonyl-[pyruvate, phosphate dikinase] + ADP = N(tele)-phospho-L-histidyl/O-phospho-L-threonyl-[pyruvate, phosphate dikinase] + AMP + H(+). The catalysed reaction is N(tele)-phospho-L-histidyl/O-phospho-L-threonyl-[pyruvate, phosphate dikinase] + phosphate + H(+) = N(tele)-phospho-L-histidyl/L-threonyl-[pyruvate, phosphate dikinase] + diphosphate. It functions in the pathway photosynthesis; C4 acid pathway. Its activity is regulated as follows. Regulated by light/dark exposure. Its function is as follows. Bifunctional serine/threonine kinase and phosphorylase involved in the dark/light-mediated regulation of PPDK by catalyzing its phosphorylation/dephosphorylation. Dark/light-induced changes in stromal concentrations of the competing ADP and Pi substrates govern the direction of the reaction. In the dark, phosphorylates the catalytic intermediate of PPDK (PPDK-HisP), inactivating it. Light exposure induces the phosphorolysis reaction that reactivates PPDK. Phosphorylates PPDK at both Ser-528 and Thr-527. Can use ADP as a high specificity substrate and GDP as a lower affinity substrate, but has no activity with UDP. The chain is Pyruvate, phosphate dikinase regulatory protein, chloroplastic (PDRP1) from Zea mays (Maize).